The sequence spans 137 residues: Phosphoribosyl-AMP cyclohydrolase (137 aa).

Asp-84 is a Mg(2+) binding site. Cys-85 serves as a coordination point for Zn(2+). Residues Asp-86 and Asp-88 each contribute to the Mg(2+) site. Positions 101 and 108 each coordinate Zn(2+).

The protein belongs to the PRA-CH family. As to quaternary structure, homodimer. The cofactor is Mg(2+). Zn(2+) is required as a cofactor.

It is found in the cytoplasm. The catalysed reaction is 1-(5-phospho-beta-D-ribosyl)-5'-AMP + H2O = 1-(5-phospho-beta-D-ribosyl)-5-[(5-phospho-beta-D-ribosylamino)methylideneamino]imidazole-4-carboxamide. It functions in the pathway amino-acid biosynthesis; L-histidine biosynthesis; L-histidine from 5-phospho-alpha-D-ribose 1-diphosphate: step 3/9. In terms of biological role, catalyzes the hydrolysis of the adenine ring of phosphoribosyl-AMP. This is Phosphoribosyl-AMP cyclohydrolase from Chlorobium limicola (strain DSM 245 / NBRC 103803 / 6330).